A 251-amino-acid polypeptide reads, in one-letter code: Probable transcriptional regulatory protein BLD_0450 (251 aa).

The protein belongs to the TACO1 family.

Its subcellular location is the cytoplasm. This Bifidobacterium longum (strain DJO10A) protein is Probable transcriptional regulatory protein BLD_0450.